Consider the following 256-residue polypeptide: Cell division protein DivIB (256 aa).

The Cytoplasmic portion of the chain corresponds to M1–K23. The helical transmembrane segment at I24–Y44 threads the bilayer. Residues F45–R113 form the POTRA domain. Residues F45–K256 are Extracellular-facing.

It belongs to the FtsQ/DivIB family. DivIB subfamily.

Its subcellular location is the cell membrane. Functionally, cell division protein that may be involved in stabilizing or promoting the assembly of the division complex. This chain is Cell division protein DivIB, found in Clostridium botulinum (strain Loch Maree / Type A3).